The following is a 431-amino-acid chain: Enolase (431 aa).

Glutamine 167 lines the (2R)-2-phosphoglycerate pocket. Glutamate 209 acts as the Proton donor in catalysis. Residues aspartate 246, glutamate 290, and aspartate 317 each coordinate Mg(2+). 4 residues coordinate (2R)-2-phosphoglycerate: lysine 342, arginine 371, serine 372, and lysine 393. Catalysis depends on lysine 342, which acts as the Proton acceptor.

The protein belongs to the enolase family. Component of the RNA degradosome, a multiprotein complex involved in RNA processing and mRNA degradation. The cofactor is Mg(2+).

The protein resides in the cytoplasm. It localises to the secreted. It is found in the cell surface. The catalysed reaction is (2R)-2-phosphoglycerate = phosphoenolpyruvate + H2O. It functions in the pathway carbohydrate degradation; glycolysis; pyruvate from D-glyceraldehyde 3-phosphate: step 4/5. In terms of biological role, catalyzes the reversible conversion of 2-phosphoglycerate (2-PG) into phosphoenolpyruvate (PEP). It is essential for the degradation of carbohydrates via glycolysis. The polypeptide is Enolase (Yersinia pestis bv. Antiqua (strain Antiqua)).